The chain runs to 139 residues: MAVCIAVIAKENYPLYIRSVPTENELKFHYTVHTSLDVVDEKISAMGKALVDQRELYLGLLYPTEDYKVYGYVTNSKVKFVMVVDSSNTALRDNEIRSMFRKLHNSYTDIMCNPFYNPGDRIHSRAFDTMVNSMMMQVC.

Belongs to the TRAPP small subunits family. Sedlin subfamily.

The protein resides in the cytoplasm. It is found in the perinuclear region. The protein localises to the endoplasmic reticulum. It localises to the golgi apparatus. May play a role in vesicular transport from endoplasmic reticulum to Golgi. This chain is Trafficking protein particle complex subunit 2-like protein (TRAPPC2L), found in Taeniopygia guttata (Zebra finch).